A 599-amino-acid polypeptide reads, in one-letter code: UvrABC system protein C (599 aa).

The GIY-YIG domain occupies 13–91; it reads NLPGVYRMIN…IKGFMPRYNV (79 aa). One can recognise a UVR domain in the interval 200 to 235; sequence QQVMDELGEKMNEAAEKMEYELAAVYRDRIQSLRQV.

It belongs to the UvrC family. As to quaternary structure, interacts with UvrB in an incision complex.

Its subcellular location is the cytoplasm. Functionally, the UvrABC repair system catalyzes the recognition and processing of DNA lesions. UvrC both incises the 5' and 3' sides of the lesion. The N-terminal half is responsible for the 3' incision and the C-terminal half is responsible for the 5' incision. The polypeptide is UvrABC system protein C (Methylobacillus flagellatus (strain ATCC 51484 / DSM 6875 / VKM B-1610 / KT)).